We begin with the raw amino-acid sequence, 261 residues long: Sulfur carrier protein FdhD (261 aa).

The active-site Cysteine persulfide intermediate is the Cys105. 245-250 (FIRGDR) lines the Mo-bis(molybdopterin guanine dinucleotide) pocket.

This sequence belongs to the FdhD family.

The protein resides in the cytoplasm. In terms of biological role, required for formate dehydrogenase (FDH) activity. Acts as a sulfur carrier protein that transfers sulfur from IscS to the molybdenum cofactor prior to its insertion into FDH. This chain is Sulfur carrier protein FdhD, found in Listeria monocytogenes serovar 1/2a (strain ATCC BAA-679 / EGD-e).